The following is a 234-amino-acid chain: Probable septum site-determining protein MinC (234 aa).

Belongs to the MinC family. As to quaternary structure, interacts with MinD and FtsZ.

Its function is as follows. Cell division inhibitor that blocks the formation of polar Z ring septums. Rapidly oscillates between the poles of the cell to destabilize FtsZ filaments that have formed before they mature into polar Z rings. Prevents FtsZ polymerization. This Pseudoalteromonas translucida (strain TAC 125) protein is Probable septum site-determining protein MinC.